A 769-amino-acid chain; its full sequence is Serine protease HtrA-like (769 aa).

A compositionally biased stretch (basic residues) spans Met-1–Glu-20. Positions Met-1–Ala-390 are disordered. Composition is skewed to basic and acidic residues over residues Phe-21 to Lys-64 and Leu-71 to Lys-108. The span at Tyr-126–Lys-137 shows a compositional bias: polar residues. The segment covering Ser-138–Ser-186 has biased composition (basic and acidic residues). Polar residues predominate over residues Gln-247–Ser-262. Basic and acidic residues-rich tracts occupy residues Gln-264–Asp-296 and Lys-310–Asn-330. Over residues Ala-331–His-347 the composition is skewed to polar residues. Residues Arg-348 to Asn-364 show a composition bias toward basic and acidic residues. Polar residues predominate over residues Gly-365–Ala-390. A helical transmembrane segment spans residues Leu-410–Val-430. Residues His-504, Asp-534, and Ser-619 each act as charge relay system in the active site. A PDZ domain is found at Ile-680–Asp-733.

This sequence belongs to the peptidase S1C family.

The protein resides in the cell membrane. This chain is Serine protease HtrA-like, found in Staphylococcus aureus (strain USA300).